Here is a 334-residue protein sequence, read N- to C-terminus: Putative heat shock protein HSP 90-alpha A5 (334 aa).

Residues 55–107 are disordered; that stretch reads KRNKQVSDAEAEKKEDKRKKKKESNDKPEIEDVGSDEEEEKKDADKKKKKSKE. Residues 59–69 show a composition bias toward basic and acidic residues; that stretch reads QVSDAEAEKKE. The segment covering 85–94 has biased composition (acidic residues); that stretch reads EDVGSDEEEE. At serine 89 the chain carries Phosphoserine. The stretch at 234–267 forms a coiled coil; that stretch reads LELPEDEEEKKKQEEKKTKFENLCKIMKDMLEKK. A disordered region spans residues 314 to 334; the sequence is EMPPLRGGDDTSRMEEVGGSG. Residues 320–334 show a composition bias toward basic and acidic residues; sequence GGDDTSRMEEVGGSG. The short motif at 327–331 is the TPR repeat-binding element; sequence MEEVG.

It belongs to the heat shock protein 90 family. As to quaternary structure, homodimer.

It localises to the cytoplasm. Functionally, putative molecular chaperone that may promote the maturation, structural maintenance and proper regulation of specific target proteins. The polypeptide is Putative heat shock protein HSP 90-alpha A5 (HSP90AA5P) (Homo sapiens (Human)).